Consider the following 293-residue polypeptide: Phosphatidylserine decarboxylase proenzyme (293 aa).

Active-site charge relay system; for autoendoproteolytic cleavage activity residues include Asp88, His144, and Ser247. The active-site Schiff-base intermediate with substrate; via pyruvic acid; for decarboxylase activity is Ser247. Ser247 bears the Pyruvic acid (Ser); by autocatalysis mark.

This sequence belongs to the phosphatidylserine decarboxylase family. PSD-B subfamily. Prokaryotic type I sub-subfamily. In terms of assembly, heterodimer of a large membrane-associated beta subunit and a small pyruvoyl-containing alpha subunit. Pyruvate serves as cofactor. Is synthesized initially as an inactive proenzyme. Formation of the active enzyme involves a self-maturation process in which the active site pyruvoyl group is generated from an internal serine residue via an autocatalytic post-translational modification. Two non-identical subunits are generated from the proenzyme in this reaction, and the pyruvate is formed at the N-terminus of the alpha chain, which is derived from the carboxyl end of the proenzyme. The autoendoproteolytic cleavage occurs by a canonical serine protease mechanism, in which the side chain hydroxyl group of the serine supplies its oxygen atom to form the C-terminus of the beta chain, while the remainder of the serine residue undergoes an oxidative deamination to produce ammonia and the pyruvoyl prosthetic group on the alpha chain. During this reaction, the Ser that is part of the protease active site of the proenzyme becomes the pyruvoyl prosthetic group, which constitutes an essential element of the active site of the mature decarboxylase.

It localises to the cell membrane. The enzyme catalyses a 1,2-diacyl-sn-glycero-3-phospho-L-serine + H(+) = a 1,2-diacyl-sn-glycero-3-phosphoethanolamine + CO2. It participates in phospholipid metabolism; phosphatidylethanolamine biosynthesis; phosphatidylethanolamine from CDP-diacylglycerol: step 2/2. Functionally, catalyzes the formation of phosphatidylethanolamine (PtdEtn) from phosphatidylserine (PtdSer). In Xylella fastidiosa (strain 9a5c), this protein is Phosphatidylserine decarboxylase proenzyme.